Consider the following 263-residue polypeptide: Formamidopyrimidine-DNA glycosylase (263 aa).

Catalysis depends on Pro2, which acts as the Schiff-base intermediate with DNA. Residue Glu3 is the Proton donor of the active site. Lys59 serves as the catalytic Proton donor; for beta-elimination activity. Positions 93 and 111 each coordinate DNA. The FPG-type zinc-finger motif lies at 229–263 (KVYGKNGSLCVRCNNVLIRERHAGRSTHYCPHCQK). Catalysis depends on Arg253, which acts as the Proton donor; for delta-elimination activity.

It belongs to the FPG family. As to quaternary structure, monomer. It depends on Zn(2+) as a cofactor.

The catalysed reaction is Hydrolysis of DNA containing ring-opened 7-methylguanine residues, releasing 2,6-diamino-4-hydroxy-5-(N-methyl)formamidopyrimidine.. The enzyme catalyses 2'-deoxyribonucleotide-(2'-deoxyribose 5'-phosphate)-2'-deoxyribonucleotide-DNA = a 3'-end 2'-deoxyribonucleotide-(2,3-dehydro-2,3-deoxyribose 5'-phosphate)-DNA + a 5'-end 5'-phospho-2'-deoxyribonucleoside-DNA + H(+). Functionally, involved in base excision repair of DNA damaged by oxidation or by mutagenic agents. Acts as a DNA glycosylase that recognizes and removes damaged bases. Has a preference for oxidized purines, such as 7,8-dihydro-8-oxoguanine (8-oxoG). Has AP (apurinic/apyrimidinic) lyase activity and introduces nicks in the DNA strand. Cleaves the DNA backbone by beta-delta elimination to generate a single-strand break at the site of the removed base with both 3'- and 5'-phosphates. The chain is Formamidopyrimidine-DNA glycosylase from Carboxydothermus hydrogenoformans (strain ATCC BAA-161 / DSM 6008 / Z-2901).